Reading from the N-terminus, the 1083-residue chain is MRFAATVSEKQSEQSVEVTEEFAVTMTEKRSCVHFDKYVDLDKLLKIIKSYQQIKCGECNERVHVKRGSRWGASNRRDWYSSSDQNCARNAIWLCLECGYYVCGDVGLPTEAQSHVMGHNRLTRHRLVIQCKNPQLRWCFSCQSLLPFDNEENGEKKDLLLEVVKLIRERSPNTYSASFETEFSCSGSIYGGIEARDGYAVRGLVNLGNTCFFNSVMQNLLSLDQLREHFLKEDLSVSGPLVSSLKELFAESNSEASVFRNEINPRDLFFSVCSQAPQFRGYQQHDSHELLRCLLDGLSIEESSLRKKLGVSDSNDSSTYQKPTLIDSVFGGEISSTVSCLECGHFSKVYEPFMDLSLPVPSMKLPPKKQQILSQAKEVLKNGAVSKDSEVVSAKPASDHNSTVPLFPSDHKIQSRPETSDNETDLVLLSDVSDTAPSTEAKGVNQILVGSTETLMHDNDRTGKTVPDKEDVRATQSNEETSASGISAVIDEAQVCGCPDLEQSSSSANQGADEELALMVADSQVLYMPYKDHLFYDDYMVAEASSSFVSGDHEPKKDYFDFSSFLDEPEIREGPVFRPLSKSEVYEAGFKADCSDDKTVSAGKGEASSSFISSDHEQNIDYVDFSSFFDEPEISERPFFRPLSKSEVSEAGFKADCSDDKTVSAGKGEASSSFVSSDHEQNIDYVDFSSFFDEPEISERPFFRPLSKSEVSEAGFMAVSGNDKTVRAGKGETFSSFMSGDNERNIDYVEFTNRIFDDRGTSERPVFGPPSKAKVSEAGFVAVSSDSDPAVLDESDSPVSVDRCLAQFTKHEILSEDNAWHCENCSKNLKLQRLREKRRTKEGLSNRWVNENGASSAFDECRDSSLNQSCIDLENGYKAAPPITKLPNCKEEESAIDDGFVGEENTKQAPITSVTETPLLGGETISSQPASDNECENWEDLAVDSEEVIVKRDARKKVLINKAPPVLTIHLKRFSQDARGRVSKLSGHVDFQEFIDLSKYMDTRCSEEDEPVYRLAGLVEHLGAMSRGHYVSYIRGGHKERRDSDTKEPNSSIWYHASDSQVRPASLEEVLRSEAYILFYERI.

The UBP-type zinc-finger motif lies at 30–165; sequence RSCVHFDKYV…KKDLLLEVVK (136 aa). 12 residues coordinate Zn(2+): cysteine 32, histidine 34, cysteine 56, cysteine 59, cysteine 95, cysteine 98, cysteine 103, histidine 115, histidine 119, histidine 125, cysteine 139, and cysteine 142. In terms of domain architecture, USP spans 202–1083; the sequence is RGLVNLGNTC…EAYILFYERI (882 aa). Cysteine 211 serves as the catalytic Nucleophile. Disordered stretches follow at residues 387-424 and 450-486; these read KDSE…DNET and GSTE…ASGI. Composition is skewed to basic and acidic residues over residues 409–419 and 455–473; these read SDHKIQSRPET and LMHD…EDVR. The span at 474-485 shows a compositional bias: polar residues; the sequence is ATQSNEETSASG. The active-site Proton acceptor is histidine 1029.

It belongs to the peptidase C19 family.

It catalyses the reaction Thiol-dependent hydrolysis of ester, thioester, amide, peptide and isopeptide bonds formed by the C-terminal Gly of ubiquitin (a 76-residue protein attached to proteins as an intracellular targeting signal).. Functionally, recognizes and hydrolyzes the peptide bond at the C-terminal Gly of ubiquitin. Involved in the processing of poly-ubiquitin precursors as well as that of ubiquitinated proteins. Is involved in resistance to the arginine analog canavanine (CAN). The polypeptide is Ubiquitin carboxyl-terminal hydrolase 1 (UBP1) (Arabidopsis thaliana (Mouse-ear cress)).